Reading from the N-terminus, the 1280-residue chain is Clustered mitochondria protein homolog (1280 aa).

Residues 1 to 27 (MAASSNDASKSAMANSNVTTEVAQTPS) are compositionally biased toward polar residues. 2 disordered regions span residues 1-49 (MAAS…GQLP) and 169-189 (GLDQ…LADY). Acidic residues predominate over residues 32–43 (VNGEVEATEEDG). The 245-residue stretch at 338–582 (DLARTQESYL…RLTPLDVAWI (245 aa)) folds into the Clu domain. Disordered regions lie at residues 633-669 (KANK…EPEQ), 905-943 (GAAV…AVSL), and 1214-1280 (TGRN…TQKP). Positions 635–648 (NKARGGRRRLPKAQ) are enriched in basic residues. The segment covering 649-669 (KKADAGKEVDGEKKAEAEPEQ) has biased composition (basic and acidic residues). The segment covering 1221–1235 (PAAATPSVSDAAAAA) has biased composition (low complexity). A compositionally biased stretch (basic and acidic residues) spans 1245-1261 (VDQRKIEDLLKYIEGES). Positions 1265–1280 (PTKKRTQNPRKRTQKP) are enriched in basic residues.

The protein belongs to the CLU family. In terms of assembly, may associate with the eukaryotic translation initiation factor 3 (eIF-3) complex.

The protein localises to the cytoplasm. Functionally, mRNA-binding protein involved in proper cytoplasmic distribution of mitochondria. The polypeptide is Clustered mitochondria protein homolog (Phaeosphaeria nodorum (strain SN15 / ATCC MYA-4574 / FGSC 10173) (Glume blotch fungus)).